The sequence spans 189 residues: Peptidyl-tRNA hydrolase (189 aa).

Tyrosine 14 contacts tRNA. The active-site Proton acceptor is histidine 19. Tyrosine 64, asparagine 66, and asparagine 112 together coordinate tRNA.

This sequence belongs to the PTH family. As to quaternary structure, monomer.

The protein localises to the cytoplasm. It catalyses the reaction an N-acyl-L-alpha-aminoacyl-tRNA + H2O = an N-acyl-L-amino acid + a tRNA + H(+). Hydrolyzes ribosome-free peptidyl-tRNAs (with 1 or more amino acids incorporated), which drop off the ribosome during protein synthesis, or as a result of ribosome stalling. In terms of biological role, catalyzes the release of premature peptidyl moieties from peptidyl-tRNA molecules trapped in stalled 50S ribosomal subunits, and thus maintains levels of free tRNAs and 50S ribosomes. The chain is Peptidyl-tRNA hydrolase from Clostridium botulinum (strain ATCC 19397 / Type A).